The sequence spans 56 residues: Large ribosomal subunit protein bL33 (56 aa).

Belongs to the bacterial ribosomal protein bL33 family.

This is Large ribosomal subunit protein bL33 from Campylobacter hominis (strain ATCC BAA-381 / DSM 21671 / CCUG 45161 / LMG 19568 / NCTC 13146 / CH001A).